Consider the following 450-residue polypeptide: 23S rRNA (uracil(1939)-C(5))-methyltransferase RlmD (450 aa).

The region spanning 12-70 is the TRAM domain; sequence SKQLSAKLSLNVDQLDHLGAGIAQYQGKVVFIPGALPDETVTVQLTEQKKNYARAKLIK. Residues Cys83, Cys89, Cys92, and Cys171 each contribute to the [4Fe-4S] cluster site. S-adenosyl-L-methionine-binding residues include Gln283, Phe312, Asn317, Glu333, Asp360, and Asp380. The active-site Nucleophile is Cys406.

The protein belongs to the class I-like SAM-binding methyltransferase superfamily. RNA M5U methyltransferase family. RlmD subfamily.

The enzyme catalyses uridine(1939) in 23S rRNA + S-adenosyl-L-methionine = 5-methyluridine(1939) in 23S rRNA + S-adenosyl-L-homocysteine + H(+). Catalyzes the formation of 5-methyl-uridine at position 1939 (m5U1939) in 23S rRNA. The sequence is that of 23S rRNA (uracil(1939)-C(5))-methyltransferase RlmD from Shewanella putrefaciens (strain CN-32 / ATCC BAA-453).